The following is a 63-amino-acid chain: Iota-crystallin (63 aa).

This sequence belongs to the calycin superfamily. Fatty-acid binding protein (FABP) family.

Functionally, binds vitamin A2 in the eye lens and thus functions as a UV filter. Intracellular transport of retinol. In Gonatodes vittatus (Wiegmann's striped gecko), this protein is Iota-crystallin (CRBPI).